The chain runs to 92 residues: Putative pterin-4-alpha-carbinolamine dehydratase 2 (92 aa).

The protein belongs to the pterin-4-alpha-carbinolamine dehydratase family.

It carries out the reaction (4aS,6R)-4a-hydroxy-L-erythro-5,6,7,8-tetrahydrobiopterin = (6R)-L-erythro-6,7-dihydrobiopterin + H2O. This is Putative pterin-4-alpha-carbinolamine dehydratase 2 from Gloeobacter violaceus (strain ATCC 29082 / PCC 7421).